Reading from the N-terminus, the 218-residue chain is Cold-regulated protein 28 (218 aa).

Disordered regions lie at residues 1–51 (MEND…ADSK) and 166–218 (TKHS…KPRT). The span at 20–37 (EASAESQSESTLSNSLDS) shows a compositional bias: low complexity. Residues 186 to 207 (GEVSKKREREANNDDSSLKEDQ) show a composition bias toward basic and acidic residues.

Its subcellular location is the nucleus. In terms of biological role, together with COR27, involved in central circadian clock regulation and in flowering promotion, by binding to the chromatin of clock-associated evening genes TOC1, PRR5, ELF4 and cold-responsive genes in order to repress their transcription. Negative regulator of freezing tolerance. The chain is Cold-regulated protein 28 from Arabidopsis thaliana (Mouse-ear cress).